A 79-amino-acid polypeptide reads, in one-letter code: Centromere protein X (79 aa).

At Met1 the chain carries N-acetylmethionine.

It belongs to the CENP-X/MHF2 family. As to quaternary structure, heterodimer with CENPX, sometimes called MHF; this interaction stabilizes both partners. MHF heterodimers can assemble to form tetrameric structures. MHF also coassemble with CENPT-CENPW heterodimers at centromeres to form the tetrameric CENP-T-W-S-X complex. Forms a discrete complex with FANCM and CENPX, called FANCM-MHF; this interaction, probably mediated by direct binding between CENPS and FANCM, leads to synergistic activation of double-stranded DNA binding and strongly stimulates FANCM-mediated DNA remodeling. Recruited by FANCM to the Fanconi anemia (FA) core complex, which consists of CENPS, CENPX, FANCA, FANCB, FANCC, FANCE, FANCF, FANCG, FANCL, FANCM, FAAP24 and FAAP100. The FA core complex associates with Bloom syndrome (BLM) complex, which consists of at least BLM, DNA topoisomerase 3-alpha (TOP3A), RMI1/BLAP75, RPA1/RPA70 and RPA2/RPA32. The super complex between FA and BLM is called BRAFT.

Its subcellular location is the nucleus. It is found in the chromosome. The protein resides in the centromere. It localises to the kinetochore. Functionally, DNA-binding component of the Fanconi anemia (FA) core complex. Required for the normal activation of the FA pathway, leading to monoubiquitination of the FANCI-FANCD2 complex in response to DNA damage, cellular resistance to DNA cross-linking drugs, and prevention of chromosomal breakage. In complex with CENPS (MHF heterodimer), crucial cofactor for FANCM in both binding and ATP-dependent remodeling of DNA. Stabilizes FANCM. In complex with CENPS and FANCM (but not other FANC proteins), rapidly recruited to blocked forks and promotes gene conversion at blocked replication forks. In complex with CENPS, CENPT and CENPW (CENP-T-W-S-X heterotetramer), involved in the formation of a functional kinetochore outer plate, which is essential for kinetochore-microtubule attachment and faithful mitotic progression. As a component of MHF and CENP-T-W-S-X complexes, binds DNA and bends it to form a nucleosome-like structure. DNA-binding function is fulfilled in the presence of CENPS, with the following preference for DNA substates: Holliday junction &gt; double-stranded &gt; splay arm &gt; single-stranded. Does not bind DNA on its own. The sequence is that of Centromere protein X (CENPX) from Bos taurus (Bovine).